A 740-amino-acid polypeptide reads, in one-letter code: MIAPDSQRLFGSFDEQFKDLKLDSVDTENNNTHGVSTILDSSPASVNNNTNGAVAASVNTVPGSTFRSNTPLLGGRHPLSRTSSLIDSIGIQRAASPFSSMKEPFIPQSSGVMSSSFWHGDHPESRVSTPVQQHPLLQRNESSSSFSYAANLGVNLSTHSLAVDITPLSTPTAAQSHVNLFPSSDIPPNMSMNGMSQLPAPVSVESSWRYIDTQGQIHGPFTTQMMSQWYIGGYFASTLQISRLGSTPETLGINDIFITLGELMTKLEKYDTDPFTTFDKLHVQTTSSDSINLNLAPYASGVAATGTIKATENDIFKPLTHDNIWDMDGGTTSKGVDIKLASATTISQTDESHKQEYKSTTMLEKGKKEKSESVAKALLDEQEKRNRELKRKEEARLSKKQKQKEDDLLKKQKEQKEQKEKEALEAEKQKKSEKTKKDTQTQTEGFKTSKDLPSLNSSSANPAPWASKVKVNNAIETSIKNGVSSTGKKKGEPLGLQQRNSKEEKQKEELKSVLNWANKSSLPSNQTIDIKSQFQKSPKGMKESSPLKELEDPNFIEEQKKLWEKVQSSSKQVKSTSSASTTTSSWTTVTSKGKAPIGTVVSPYSKTNTSLNSSLTAKTSTTSTTTTFASMNNVSPRQEFIKWCKSQMKLNSGITNNNVLELLLSLPTGPESKELIQETIYANSDVMDGRRFATEFIKRRVACEKQGDDPLSWNEALALSGNDDDGWEFQVVSKKKGRKH.

Ser-12 and Ser-96 each carry phosphoserine. Thr-129 is subject to Phosphothreonine. The GYF domain occupies 205-261 (ESSWRYIDTQGQIHGPFTTQMMSQWYIGGYFASTLQISRLGSTPETLGINDIFITLG). Thr-311 carries the phosphothreonine modification. Disordered stretches follow at residues 346–510 (ISQT…KEEL), 523–548 (PSNQTIDIKSQFQKSPKGMKESSPLK), and 567–592 (QSSSKQVKSTSSASTTTSSWTTVTSK). Residues 364–439 (EKGKKEKSES…KKSEKTKKDT (76 aa)) show a composition bias toward basic and acidic residues. Residues 369 to 440 (EKSESVAKAL…KSEKTKKDTQ (72 aa)) are a coiled coil. Low complexity predominate over residues 452-467 (LPSLNSSSANPAPWAS). Polar residues predominate over residues 474 to 486 (AIETSIKNGVSST). The segment covering 500–510 (NSKEEKQKEEL) has biased composition (basic and acidic residues). The segment covering 523-536 (PSNQTIDIKSQFQK) has biased composition (polar residues). The residue at position 545 (Ser-545) is a Phosphoserine. Phosphoserine is present on Ser-602.

The protein belongs to the SMY2/mpd2 family. In terms of assembly, interacts with EAP1 and MSL5 (via the GYP domain).

Its subcellular location is the cytoplasm. Its function is as follows. Suppressor of the MYO2 gene. This is Protein SMY2 (SMY2) from Saccharomyces cerevisiae (strain ATCC 204508 / S288c) (Baker's yeast).